A 585-amino-acid polypeptide reads, in one-letter code: NADP-reducing hydrogenase subunit HndD (585 aa).

In terms of domain architecture, 2Fe-2S ferredoxin-type spans 2–85; it reads SMLTITIDGK…NMVVKTNSLR (84 aa). Positions 36, 52, 55, and 69 each coordinate [2Fe-2S] cluster. The 4Fe-4S His(Cys)3-ligated-type domain occupies 85–124; that stretch reads RVLNARRTVLELLLSDHPKDCLVCAKSGECELQTLAERFG. Residues His101, Cys105, Cys108, and Cys114 each coordinate [4Fe-4S] cluster. 4Fe-4S ferredoxin-type domains are found at residues 144–174 and 185–216; these read ASIIRDMDKCIMCRRCETMCNTVQTCGVLSG and PAFEMNLADTVCTNCGQCVAVCPTGALVEHEY.

In terms of assembly, heterotetramer composed of HndA, HndB, HndC and HndD subunits. HndD is probably the hydrogenase subunit. It depends on [4Fe-4S] cluster as a cofactor.

It carries out the reaction H2 + NADP(+) = NADPH + H(+). With respect to regulation, inhibited by oxygen. Catalyzes the reduction of NADP in the presence of molecular H(2) to yield NADPH. The chain is NADP-reducing hydrogenase subunit HndD (hndD) from Solidesulfovibrio fructosivorans (Desulfovibrio fructosivorans).